We begin with the raw amino-acid sequence, 425 residues long: MHKILIRNNYKPLVGKIKINGSKNAVLPIMAASLLSSSPVILHNVPDLIDVHLMSKLLESLGAEVNFMHNKNYKANHTLKIDCSNINNHVMPYKTASKLRTSFLILGPMLSRFGKARTAFPGGCNIGKRPVDMHIKALEEMGAKIEIDGYNIIATVKGKLQGKEITFEKISVGATENVIMAATFAEGVTTINNAATEPEVLDLIDFLKKMGADIEIDNTKVVITGVEALNGCVHKIIPDRIEAGTYALAAIITGGKLELEGINLSDIRCITNELETIGAMVELYDGGIVISRKNGSIKSANVATDPYPNFPSDMQPQLMSAMCIADGISVIEENIFENRFTHADELRKLGANISIEKSKATISGIKSLSGANLYATDLRSTAALVLASLVAGGETIINNSHHLWRGYEAMHEKLNSCGADISISS.

23 to 24 provides a ligand contact to phosphoenolpyruvate; it reads KN. Arg100 contacts UDP-N-acetyl-alpha-D-glucosamine. Cys124 (proton donor) is an active-site residue. Cys124 carries the 2-(S-cysteinyl)pyruvic acid O-phosphothioketal modification. Positions 313 and 335 each coordinate UDP-N-acetyl-alpha-D-glucosamine.

It belongs to the EPSP synthase family. MurA subfamily.

The protein resides in the cytoplasm. The catalysed reaction is phosphoenolpyruvate + UDP-N-acetyl-alpha-D-glucosamine = UDP-N-acetyl-3-O-(1-carboxyvinyl)-alpha-D-glucosamine + phosphate. It functions in the pathway cell wall biogenesis; peptidoglycan biosynthesis. Functionally, cell wall formation. Adds enolpyruvyl to UDP-N-acetylglucosamine. The polypeptide is UDP-N-acetylglucosamine 1-carboxyvinyltransferase (Wolbachia sp. subsp. Drosophila simulans (strain wRi)).